The following is a 171-amino-acid chain: MERAQKVELVAGLKSAFAEAGVIVVTRNLGLTVAQSTVLRSKMREAGASFKVAKNKLTRIAVEGTPQAPLSDLLTGPTAIATSADPVAAAKVAVEFAKTNKKLEIVGAVMGTTLLDIAGVQALAELPSLDELRGKIVGLISAPATKIAQTIQAPAGQLARVFGAYAAKDAA.

The protein belongs to the universal ribosomal protein uL10 family. In terms of assembly, part of the ribosomal stalk of the 50S ribosomal subunit. The N-terminus interacts with L11 and the large rRNA to form the base of the stalk. The C-terminus forms an elongated spine to which L12 dimers bind in a sequential fashion forming a multimeric L10(L12)X complex.

Its function is as follows. Forms part of the ribosomal stalk, playing a central role in the interaction of the ribosome with GTP-bound translation factors. This Zymomonas mobilis subsp. mobilis (strain ATCC 31821 / ZM4 / CP4) protein is Large ribosomal subunit protein uL10.